The sequence spans 244 residues: Phosphatidylinositol phosphate synthase (244 aa).

The next 3 membrane-spanning stretches (helical) occupy residues 24-42 (YARA…FLIR), 49-66 (TVTL…LVFY), and 72-91 (FWGT…DGNM). 48 to 51 (DTVT) lines the a CDP-1,2-diacyl-sn-glycerol pocket. Residues aspartate 85 and aspartate 88 each contribute to the Mg(2+) site. Positions 89, 93, and 99 each coordinate a CDP-1,2-diacyl-sn-glycerol. Mg(2+)-binding residues include aspartate 106 and aspartate 110. Aspartate 110 functions as the Proton acceptor in the catalytic mechanism. 3 helical membrane-spanning segments follow: residues 117–137 (IFGG…LCAV), 174–190 (LVIS…HKFG), and 196–214 (VLLP…VTLI).

This sequence belongs to the CDP-alcohol phosphatidyltransferase class-I family. As to quaternary structure, homodimer. Mg(2+) serves as cofactor.

Its subcellular location is the cell membrane. The enzyme catalyses a CDP-1,2-diacyl-sn-glycerol + 1D-myo-inositol 3-phosphate = a 1,2-diacyl-sn-glycero-3-phospho-(1D-myo-inositol-3-phosphate) + CMP + H(+). It carries out the reaction 1,2-di-(9Z-octadecenoyl)-sn-glycero-3-cytidine-5'-diphosphate + 1D-myo-inositol 3-phosphate = 1,2-di-(9Z-octadecenoyl)-sn-glycero-3-phospho-(1D-myo-inositol-3-phosphate) + CMP + H(+). It participates in phospholipid metabolism; phosphatidylinositol phosphate biosynthesis. Functionally, catalyzes the conjugation of the 1'-hydroxyl group of D-myo-inositol-3-phosphate (also named L-myo-inositol-1-phosphate) with a lipid tail of cytidine diphosphate diacylglycerol (CDP-DAG), forming phosphatidylinositol phosphate (PIP) and CMP. PIP is a precursor of phosphatidylinositol (PI) which is an essential lipid required for cell wall formation. In Streptomyces avermitilis (strain ATCC 31267 / DSM 46492 / JCM 5070 / NBRC 14893 / NCIMB 12804 / NRRL 8165 / MA-4680), this protein is Phosphatidylinositol phosphate synthase.